A 167-amino-acid polypeptide reads, in one-letter code: Protein FimG (167 aa).

A signal peptide spans 1-23 (MKWCKRGYVLAAILALASATIQA). A disulfide bond links Cys-39 and Cys-77.

It belongs to the fimbrial protein family.

The protein localises to the fimbrium. In terms of biological role, involved in regulation of length and mediation of adhesion of type 1 fimbriae (but not necessary for the production of fimbriae). Involved in the integration of FimH in the fimbriae. This chain is Protein FimG (fimG), found in Escherichia coli (strain K12).